The primary structure comprises 234 residues: Cyclin-J18 (234 aa).

Belongs to the cyclin family.

The sequence is that of Cyclin-J18 (CYCJ18) from Arabidopsis thaliana (Mouse-ear cress).